The primary structure comprises 101 residues: Small ribosomal subunit protein uS14 (101 aa).

It belongs to the universal ribosomal protein uS14 family. Part of the 30S ribosomal subunit. Contacts proteins S3 and S10.

In terms of biological role, binds 16S rRNA, required for the assembly of 30S particles and may also be responsible for determining the conformation of the 16S rRNA at the A site. The sequence is that of Small ribosomal subunit protein uS14 from Methylobacterium sp. (strain 4-46).